The sequence spans 252 residues: MNNLQLEALLNETLSPQLIKDYCPNGLQVEGKVEVKRIVTGVTASMALIEAAIELKADALLVHHGYFWKNEPEAIRGMKGRRIRTLIQNDLNLYAYHLPLDIHPQLGNNAQLAQRLGICVDGGLEGHPQSVAMFGHFLQPLTGEELAHRIGQVLNRTPLHIAPDQADKLIETVGWCTGGGQDYIELAASRGLDAFISGEISERTTYSAREQSIHYFSAGHHATERYGIKALGEWLAENHGFDVTFIDIDNPV.

Positions 63, 64, 101, 220, and 224 each coordinate a divalent metal cation.

This sequence belongs to the GTP cyclohydrolase I type 2/NIF3 family. Homohexamer.

In Vibrio cholerae serotype O1 (strain ATCC 39315 / El Tor Inaba N16961), this protein is GTP cyclohydrolase 1 type 2 homolog.